A 476-amino-acid polypeptide reads, in one-letter code: Methylenetetrahydrofolate--tRNA-(uracil-5-)-methyltransferase TrmFO (476 aa).

Residue 14 to 19 (GGGLAG) participates in FAD binding. Residues 428-447 (LTEPPTHGADGKKLRGPEKS) are disordered. Residues 436–447 (ADGKKLRGPEKS) show a composition bias toward basic and acidic residues.

This sequence belongs to the MnmG family. TrmFO subfamily. FAD is required as a cofactor.

The protein localises to the cytoplasm. It carries out the reaction uridine(54) in tRNA + (6R)-5,10-methylene-5,6,7,8-tetrahydrofolate + NADH + H(+) = 5-methyluridine(54) in tRNA + (6S)-5,6,7,8-tetrahydrofolate + NAD(+). The catalysed reaction is uridine(54) in tRNA + (6R)-5,10-methylene-5,6,7,8-tetrahydrofolate + NADPH + H(+) = 5-methyluridine(54) in tRNA + (6S)-5,6,7,8-tetrahydrofolate + NADP(+). In terms of biological role, catalyzes the folate-dependent formation of 5-methyl-uridine at position 54 (M-5-U54) in all tRNAs. This is Methylenetetrahydrofolate--tRNA-(uracil-5-)-methyltransferase TrmFO from Rhodopseudomonas palustris (strain BisA53).